A 417-amino-acid polypeptide reads, in one-letter code: Type II methyltransferase M.Eco47II (417 aa).

Residues Y81–I414 enclose the SAM-dependent MTase C5-type domain. Residue C153 is part of the active site.

It belongs to the class I-like SAM-binding methyltransferase superfamily. C5-methyltransferase family.

The enzyme catalyses a 2'-deoxycytidine in DNA + S-adenosyl-L-methionine = a 5-methyl-2'-deoxycytidine in DNA + S-adenosyl-L-homocysteine + H(+). Functionally, a methylase that recognizes the double-stranded sequence 5'-GGNCC-3', methylates C-? on both strands, and protects the DNA from cleavage by both the Eco47I and Eco47II endonucleases. In Escherichia coli, this protein is Type II methyltransferase M.Eco47II.